Here is a 416-residue protein sequence, read N- to C-terminus: Solute carrier family 35 member D3 (416 aa).

The next 10 membrane-spanning stretches (helical) occupy residues 9–29 (VLGI…NILL), 38–58 (FSFL…SLEL), 64–84 (LIAV…VAVL), 103–123 (MYVV…VLVL), 131–151 (GVLA…AGDL), 155–175 (PIGY…LVLI), 187–207 (LTAQ…CSFA), 224–244 (AMVC…FTTL), 257–277 (FVGV…FSDV), and 280–300 (TSLF…YCVA). A disordered region spans residues 334 to 384 (MEELPGEGGNGRSEGGEAAGGPAQESRQEVRGSPRGVPLVAGSSEEGSRRS). Residues 339-352 (GEGGNGRSEGGEAA) show a composition bias toward gly residues.

This sequence belongs to the TPT transporter family. SLC35D subfamily. In terms of assembly, could interact with ATG14, BECN1 and PIK3C3 that form the PI3KC3-C1/AIC/autophagy initiation complex; enhancing the formation of the AIC and promoting autophagy.

It is found in the cytoplasmic vesicle. The protein localises to the secretory vesicle. Its subcellular location is the synaptic vesicle membrane. The protein resides in the early endosome membrane. It localises to the endoplasmic reticulum membrane. It carries out the reaction UDP-alpha-D-glucose(in) = UDP-alpha-D-glucose(out). Inhibited by proton uncouplers that directly abolish the proton electrochemical gradient. Functionally, probable UDP-glucose transmembrane transporter involved in UDP-glucose transport from the cytosol to the lumen of synaptic vesicles. It is involved in platelet dense granules maturation. In terms of biological role, alternatively, could function as a molecular adapter enhancing the formation of the PI3KC3-C1/AIC/autophagy initiation complex to promote autophagy in dopaminergic neurons. Could also regulate the plasma membrane localization of the D(1A) dopamine receptor/DRD1 and dopamine signaling. The chain is Solute carrier family 35 member D3 from Homo sapiens (Human).